Reading from the N-terminus, the 856-residue chain is Dynamin-1 (856 aa).

The Dynamin-type G domain occupies 28-294 (DLDLPQIAVV…LTNHIRDTLP (267 aa)). Positions 38-45 (GGQSAGKS) are G1 motif. Residues Ser41, Gly43, Lys44, Ser45, Ser46, Arg59, and Gly60 each contribute to the GDP site. The G2 motif stretch occupies residues 64-66 (VTR). Tyr80 is subject to Phosphotyrosine. At Tyr125 the chain carries 3'-nitrotyrosine; alternate. Tyr125 bears the Phosphotyrosine; alternate mark. The interval 136–139 (DLPG) is G3 motif. Residues 205 to 208 (TKLD) form a G4 motif region. 6 residues coordinate GDP: Lys206, Asp208, Asp211, Asn236, Arg237, and Gln239. The segment at 235 to 238 (VNRS) is G5 motif. 2 positions are modified to phosphoserine: Ser306 and Ser347. The residue at position 354 (Tyr354) is a Phosphotyrosine. Residue Ser512 is modified to Phosphoserine. The region spanning 519 to 625 (LVIRKGWLTI…WKASFLRAGV (107 aa)) is the PH domain. One can recognise a GED domain in the interval 659 to 750 (VETIRNLVDS…IIGDINTTTV (92 aa)). The disordered stretch occupies residues 750 to 856 (VSTPMPPPVD…PIGSGKSIPS (107 aa)). Over residues 763-781 (LQVQSVPTGRRSPTSSPTP) the composition is skewed to polar residues. 2 positions are modified to phosphoserine: Ser774 and Ser778. Arg796 is modified (omega-N-methylarginine). Ser822 carries the post-translational modification Phosphoserine. The segment covering 825-844 (PFGPPPQVPSRPNRAPPGVP) has biased composition (pro residues).

This sequence belongs to the TRAFAC class dynamin-like GTPase superfamily. Dynamin/Fzo/YdjA family. As to quaternary structure, homodimer; homodimerization is mediated by the dynamin-type G domain which promotes assembly-stimulated GTPase activity. Homo-tetramer formed from two dimers in the absence of lipid. Oligomerizes into a helical polymer that self-assembles around the vesicle membrane, when associated to the menbrane through lipid binding. Interacts (via C-terminal proline-rich domain (PRD)) with SNX9 (via SH3 domain); this interaction allows regulation of DNM1 self-assembly during late stages of endocytic vesicle formation and supports DNM1's early functions in accelerating clathrin-coated pits (CCPs) maturation in non neuronals cell. Interacts (via C-terminal proline-rich domain (PRD)) with MYO1E (via SH3 domain); this interaction regulates receptor-mediated endocytosis. Interacts with SNX33 (via SH3 domain); this interaction decreases DNM1-dependent endocytosis. Interacts with DIAPH1. Interacts with GRB2 (via SH3 domain); this interaction mediates disassembly of DNM1 polymers, therefore modulates self-assembly. Forms a complex with BIN1 (via SH3 domain) and SH3GL2 (via SH3 domain). Forms a complex with SH3GL2 (via SH3 domain) and AMPH (via SH3 domain). Forms a complex with SH3GL2 (via SH3 domain) and SYNJ1. Interacts with AMPH. Interacts (via C-terminal proline-rich domain (PRD)) with SYT1; this interaction facilitates vesicle fission during clathrin-mediated endocytosis (CME). Interacts (via C-terminal proline-rich domain (PRD)) with PLCG1 (via SH3 domain); this interaction stimulates the release of GDP from DNM1 and enhances DNM1-dependent endocytosis. Interacts with SNPH; this interaction inhibits the binding of DNM1 to AMPH and DNM1-receptor-mediated endocytosis. Interacts with CAV1. Interacts with SH3GLB1 (via SH3 domain). Interacts with PACSIN1 (via SH3 domain), PACSIN2 (via SH3 domain) and PACSIN3 (via SH3 domain). Interacts with UNC119; this interaction decreases DNM1's GTPase activity and affects DNM1's interaction with AMPH. Interacts with AMPH. Interacts (GTP-bound form) with DNAJC6; this interaction allows clathrin-coated vesicle (CCV) formation at the plasma membrane. In terms of processing, phosphorylation at Ser-774 by GSK3B/GSK3-beta leads to inactivation of receptor-mediated endocytosis in non-neuronal cells. Dephosphorylation at Ser-774, through the EGFR downstream signaling, leads to activation and regulates early stages of clathrin-mediated endocytosis (CME).

It is found in the cell membrane. The protein localises to the membrane. It localises to the clathrin-coated pit. Its subcellular location is the cytoplasmic vesicle. The protein resides in the presynapse. It is found in the secretory vesicle. The protein localises to the chromaffin granule. It carries out the reaction GTP + H2O = GDP + phosphate + H(+). Catalyzes the hydrolysis of GTP and utilizes this energy to mediate vesicle scission and participates in many forms of endocytosis, such as clathrin-mediated endocytosis or synaptic vesicle endocytosis as well as rapid endocytosis (RE). Associates to the membrane, through lipid binding, and self-assembles into rings and stacks of interconnected rings through oligomerization to form a helical polymer around the vesicle membrane leading to constriction of invaginated coated pits around their necks. Self-assembly of the helical polymer induces membrane tubules narrowing until the polymer reaches a length sufficient to trigger GTP hydrolysis. Depending on the curvature imposed on the tubules, membrane detachment from the helical polymer upon GTP hydrolysis can cause spontaneous hemifission followed by complete fission. May play a role in regulating early stages of clathrin-mediated endocytosis in non-neuronal cells through its activation by dephosphorylation via the signaling downstream of EGFR. Controls vesicle size at a step before fission, during formation of membrane pits, at hippocampal synapses. Controls plastic adaptation of the synaptic vesicle recycling machinery to high levels of activity. Mediates rapid endocytosis (RE), a Ca(2+)-dependent and clathrin- and K(+)-independent process in chromaffin cells. Microtubule-associated force-producing protein involved in producing microtubule bundles and able to bind and hydrolyze GTP. Through its interaction with DNAJC6, acts during the early steps of clathrin-coated vesicle (CCV) formation. This chain is Dynamin-1, found in Bos taurus (Bovine).